Reading from the N-terminus, the 206-residue chain is Large ribosomal subunit protein uL4 (206 aa).

Positions 47–77 (GTHDTKTRGEVSGGGRKPWRQKGTGRARHGS) are disordered. Positions 63 to 77 (KPWRQKGTGRARHGS) are enriched in basic residues.

Belongs to the universal ribosomal protein uL4 family. In terms of assembly, part of the 50S ribosomal subunit.

In terms of biological role, one of the primary rRNA binding proteins, this protein initially binds near the 5'-end of the 23S rRNA. It is important during the early stages of 50S assembly. It makes multiple contacts with different domains of the 23S rRNA in the assembled 50S subunit and ribosome. Forms part of the polypeptide exit tunnel. The chain is Large ribosomal subunit protein uL4 from Carboxydothermus hydrogenoformans (strain ATCC BAA-161 / DSM 6008 / Z-2901).